The following is a 141-amino-acid chain: Hemoglobin subunit alpha-1 (141 aa).

The Globin domain maps to 1–141; sequence VLTDAEKKEV…VATVLTSKYR (141 aa). Position 58 (histidine 58) interacts with O2. Histidine 87 contacts heme b.

The protein belongs to the globin family. In terms of assembly, heterotetramer of two alpha chains and two beta chains. Red blood cells.

In terms of biological role, involved in oxygen transport from the lung to the various peripheral tissues. The sequence is that of Hemoglobin subunit alpha-1 from Tachyglossus aculeatus aculeatus (Southeast Australian short-beaked echidna).